The sequence spans 235 residues: MTFSIMRFNPETDKKPYMQDFELDVSAIQGKMLLNALEALREKHPDIGLRRSCAEGVCGSDGMNINGKNALACVTQLKDLPDRVVVRPLPGFPIIRDLIVDMEQFYAQYKKVKPYLLNDQEAPQKERLQSPEERAKLDGLYECILCACCSSSCPSYWWNPDKFIGPAGLLWSYRFIADSRDSKEKERLDAMKDPYSVFRCRTIMDCATVCPKNLNPAKAIRKIRTEMLQETESGE.

Cysteine 53, cysteine 58, and cysteine 73 together coordinate [2Fe-2S] cluster. One can recognise a 4Fe-4S ferredoxin-type domain in the interval glutamate 133–phenylalanine 163. [4Fe-4S] cluster-binding residues include cysteine 143, cysteine 146, and cysteine 149. Cysteine 153 serves as a coordination point for [3Fe-4S] cluster. Tryptophan 158 is an a ubiquinone binding site. The [3Fe-4S] cluster site is built by cysteine 200 and cysteine 206. Residue cysteine 210 participates in [4Fe-4S] cluster binding.

It belongs to the succinate dehydrogenase/fumarate reductase iron-sulfur protein family. As to quaternary structure, part of an enzyme complex containing four subunits: a flavoprotein, an iron-sulfur protein, cytochrome b-556 and a hydrophobic protein. [2Fe-2S] cluster serves as cofactor. Requires [3Fe-4S] cluster as cofactor. [4Fe-4S] cluster is required as a cofactor.

The catalysed reaction is a quinone + succinate = fumarate + a quinol. Its pathway is carbohydrate metabolism; tricarboxylic acid cycle; fumarate from succinate (bacterial route): step 1/1. This Coxiella burnetii (strain RSA 493 / Nine Mile phase I) protein is Succinate dehydrogenase iron-sulfur subunit (sdhB).